A 396-amino-acid polypeptide reads, in one-letter code: Ornithine aminotransferase (396 aa).

An N6-(pyridoxal phosphate)lysine modification is found at K255.

The protein belongs to the class-III pyridoxal-phosphate-dependent aminotransferase family. OAT subfamily. Pyridoxal 5'-phosphate is required as a cofactor.

It is found in the cytoplasm. It carries out the reaction a 2-oxocarboxylate + L-ornithine = L-glutamate 5-semialdehyde + an L-alpha-amino acid. It functions in the pathway amino-acid biosynthesis; L-proline biosynthesis; L-glutamate 5-semialdehyde from L-ornithine: step 1/1. Its function is as follows. Catalyzes the interconversion of ornithine to glutamate semialdehyde. The sequence is that of Ornithine aminotransferase from Bacillus anthracis (strain A0248).